Here is a 2004-residue protein sequence, read N- to C-terminus: Alpha-2-macroglobulin homolog (2004 aa).

The first 27 residues, 1–27, serve as a signal peptide directing secretion; it reads MLCCLVFKGLLSMDLLRFLLISPFALI.

This sequence belongs to the protease inhibitor I39 (alpha-2-macroglobulin) family. Bacterial alpha-2-macroglobulin subfamily.

The protein is Alpha-2-macroglobulin homolog of Yersinia pestis.